The chain runs to 326 residues: Sucrose operon repressor (326 aa).

An HTH lacI-type domain is found at 1–57 (MKPKLNDVAKLAGVSATTVSRVINNHGYLSSQTKEKVFAAMRELHYQPNNMARSLQG). Residues 5 to 24 (LNDVAKLAGVSATTVSRVIN) constitute a DNA-binding region (H-T-H motif).

Functionally, negative regulator of scrB expression. The polypeptide is Sucrose operon repressor (scrR) (Pediococcus pentosaceus).